A 341-amino-acid polypeptide reads, in one-letter code: MKALSKLKAEEGIWMTDVPVPELGHNDLLIKIRKTAICGTDVHIYNWDEWSQKTIPVPMVVGHEYVGEVVGIGQEVKGFKIGDRVSGEGHITCGHCRNCRGGRTHLCRNTIGVGVNRPGCFAEYLVIPAFNAFKIPDNISDDLAAIFDPFGNAVHTALSFDLVGEDVLVSGAGPIGIMAAAVAKHVGARNVVITDVNEYRLELARKMGITRAVNVAKENLNDVMAELGMTEGFDVGLEMSGAPPAFRTMLDTMNHGGRIAMLGIPPSDMSIDWTKVIFKGLFIKGIYGREMFETWYKMAALIQSGLDLSPIITHRFSIDDFQKGFDAMRSGQSGKVILSWD.

Cysteine 38 is a binding site for Zn(2+). Catalysis depends on charge relay system residues threonine 40 and histidine 43. 6 residues coordinate Zn(2+): histidine 63, glutamate 64, cysteine 93, cysteine 96, cysteine 99, and cysteine 107. NAD(+) is bound by residues isoleucine 175, aspartate 195, arginine 200, 262–264 (LGI), and 286–287 (IY).

Belongs to the zinc-containing alcohol dehydrogenase family. In terms of assembly, homotetramer. Zn(2+) is required as a cofactor.

It localises to the cytoplasm. It catalyses the reaction L-threonine + NAD(+) = (2S)-2-amino-3-oxobutanoate + NADH + H(+). Its pathway is amino-acid degradation; L-threonine degradation via oxydo-reductase pathway; glycine from L-threonine: step 1/2. Its function is as follows. Catalyzes the NAD(+)-dependent oxidation of L-threonine to 2-amino-3-ketobutyrate. This Escherichia coli (strain K12 / MC4100 / BW2952) protein is L-threonine 3-dehydrogenase.